We begin with the raw amino-acid sequence, 99 residues long: Large ribosomal subunit protein uL23 (99 aa).

Belongs to the universal ribosomal protein uL23 family. Part of the 50S ribosomal subunit. Contacts protein L29, and trigger factor when it is bound to the ribosome.

One of the early assembly proteins it binds 23S rRNA. One of the proteins that surrounds the polypeptide exit tunnel on the outside of the ribosome. Forms the main docking site for trigger factor binding to the ribosome. This Azotobacter vinelandii (strain DJ / ATCC BAA-1303) protein is Large ribosomal subunit protein uL23.